Consider the following 586-residue polypeptide: Pyruvate kinase (586 aa).

Arg32 contributes to the substrate binding site. K(+) contacts are provided by Asn34, Ser36, Asp66, and Thr67. 34–37 (NFSH) is an ATP binding site. Positions 73 and 156 each coordinate ATP. Glu222 contributes to the Mg(2+) binding site. Gly245, Asp246, and Thr278 together coordinate substrate. Mg(2+) is bound at residue Asp246.

This sequence belongs to the pyruvate kinase family. The protein in the C-terminal section; belongs to the PEP-utilizing enzyme family. Mg(2+) serves as cofactor. The cofactor is K(+).

It carries out the reaction pyruvate + ATP = phosphoenolpyruvate + ADP + H(+). The protein operates within carbohydrate degradation; glycolysis; pyruvate from D-glyceraldehyde 3-phosphate: step 5/5. The sequence is that of Pyruvate kinase (pyk) from Staphylococcus haemolyticus (strain JCSC1435).